The sequence spans 381 residues: Cytochrome b (381 aa).

The next 4 membrane-spanning stretches (helical) occupy residues 34-54, 78-99, 114-134, and 179-199; these read FGSL…FLAM, WLIR…YIHI, WNIG…GYVL, and FFAF…IHVL. Heme b contacts are provided by H84 and H98. Residues H183 and H197 each contribute to the heme b site. H202 serves as a coordination point for a ubiquinone. The next 4 membrane-spanning stretches (helical) occupy residues 227-247, 289-309, 321-341, and 348-368; these read YKDA…ALFL, LGGV…PLLH, LTQV…WIGG, and FILI…IAMP.

This sequence belongs to the cytochrome b family. In terms of assembly, the cytochrome bc1 complex contains 3 respiratory subunits (MT-CYB, CYC1 and UQCRFS1), 2 core proteins (UQCRC1 and UQCRC2) and probably 6 low-molecular weight proteins. Requires heme b as cofactor.

The protein localises to the mitochondrion inner membrane. In terms of biological role, component of the ubiquinol-cytochrome c reductase complex (complex III or cytochrome b-c1 complex) that is part of the mitochondrial respiratory chain. The b-c1 complex mediates electron transfer from ubiquinol to cytochrome c. Contributes to the generation of a proton gradient across the mitochondrial membrane that is then used for ATP synthesis. The chain is Cytochrome b (mt-cyb) from Isurus paucus (Longfin mako shark).